Consider the following 357-residue polypeptide: Phosphoribosylformylglycinamidine cyclo-ligase (357 aa).

It belongs to the AIR synthase family.

The protein localises to the cytoplasm. It catalyses the reaction 2-formamido-N(1)-(5-O-phospho-beta-D-ribosyl)acetamidine + ATP = 5-amino-1-(5-phospho-beta-D-ribosyl)imidazole + ADP + phosphate + H(+). Its pathway is purine metabolism; IMP biosynthesis via de novo pathway; 5-amino-1-(5-phospho-D-ribosyl)imidazole from N(2)-formyl-N(1)-(5-phospho-D-ribosyl)glycinamide: step 2/2. The polypeptide is Phosphoribosylformylglycinamidine cyclo-ligase (Rhizobium etli (strain ATCC 51251 / DSM 11541 / JCM 21823 / NBRC 15573 / CFN 42)).